A 438-amino-acid chain; its full sequence is 3-phosphoshikimate 1-carboxyvinyltransferase (438 aa).

3-phosphoshikimate-binding residues include K26, S27, and R31. K26 serves as a coordination point for phosphoenolpyruvate. The phosphoenolpyruvate site is built by G99 and R127. Residues S172, Q174, D320, and K347 each contribute to the 3-phosphoshikimate site. Q174 is a phosphoenolpyruvate binding site. D320 acts as the Proton acceptor in catalysis. The phosphoenolpyruvate site is built by R351 and R392.

Belongs to the EPSP synthase family. In terms of assembly, monomer.

It is found in the cytoplasm. It carries out the reaction 3-phosphoshikimate + phosphoenolpyruvate = 5-O-(1-carboxyvinyl)-3-phosphoshikimate + phosphate. It participates in metabolic intermediate biosynthesis; chorismate biosynthesis; chorismate from D-erythrose 4-phosphate and phosphoenolpyruvate: step 6/7. In terms of biological role, catalyzes the transfer of the enolpyruvyl moiety of phosphoenolpyruvate (PEP) to the 5-hydroxyl of shikimate-3-phosphate (S3P) to produce enolpyruvyl shikimate-3-phosphate and inorganic phosphate. The protein is 3-phosphoshikimate 1-carboxyvinyltransferase of Xanthomonas campestris pv. campestris (strain 8004).